The following is a 60-amino-acid chain: Metallothionein A (60 aa).

Residues 1–28 (MDPCECSKSGNCNCGGSCTCTNCSCKSC) are beta. Positions 4, 6, 12, 14, 18, 20, 23, 25, 28, 32, 33, 35, 36, 40, 43, 47, 49, 54, 58, and 59 each coordinate a divalent metal cation. The interval 29-60 (KKSCCPCCPSGCTKCASGCVCIGKTCDTSCCQ) is alpha.

It belongs to the metallothionein superfamily. Type 1 family.

Its function is as follows. Metallothioneins have a high content of cysteine residues that bind various heavy metals. In Chaenocephalus aceratus (Blackfin icefish), this protein is Metallothionein A (mta).